A 371-amino-acid polypeptide reads, in one-letter code: Methionine import ATP-binding protein MetN (371 aa).

The 242-residue stretch at 29-270 (IRIEGVRKVY…PRHEVTRRFV (242 aa)) folds into the ABC transporter domain. Residue 67-74 (GRSGAGKS) coordinates ATP.

The protein belongs to the ABC transporter superfamily. Methionine importer (TC 3.A.1.24) family. As to quaternary structure, the complex is composed of two ATP-binding proteins (MetN), two transmembrane proteins (MetI) and a solute-binding protein (MetQ).

The protein resides in the cell inner membrane. It catalyses the reaction L-methionine(out) + ATP + H2O = L-methionine(in) + ADP + phosphate + H(+). The enzyme catalyses D-methionine(out) + ATP + H2O = D-methionine(in) + ADP + phosphate + H(+). In terms of biological role, part of the ABC transporter complex MetNIQ involved in methionine import. Responsible for energy coupling to the transport system. The chain is Methionine import ATP-binding protein MetN from Rhodopseudomonas palustris (strain BisA53).